We begin with the raw amino-acid sequence, 143 residues long: Actin-depolymerizing factor 5 (143 aa).

The 133-residue stretch at 11–143 (GMNVKEECQR…GYDVIRGRAQ (133 aa)) folds into the ADF-H domain.

The protein belongs to the actin-binding proteins ADF family.

Its function is as follows. Actin-depolymerizing protein. Severs actin filaments (F-actin) and binds to actin monomers. The sequence is that of Actin-depolymerizing factor 5 (ADF5) from Oryza sativa subsp. japonica (Rice).